A 315-amino-acid chain; its full sequence is Aspartate carbamoyltransferase catalytic subunit (315 aa).

2 residues coordinate carbamoyl phosphate: Arg65 and Thr66. Residue Lys93 coordinates L-aspartate. 3 residues coordinate carbamoyl phosphate: Arg115, His145, and Gln148. L-aspartate is bound by residues Arg179 and Arg234. Carbamoyl phosphate contacts are provided by Gly275 and Pro276.

This sequence belongs to the aspartate/ornithine carbamoyltransferase superfamily. ATCase family. Heterododecamer (2C3:3R2) of six catalytic PyrB chains organized as two trimers (C3), and six regulatory PyrI chains organized as three dimers (R2).

It catalyses the reaction carbamoyl phosphate + L-aspartate = N-carbamoyl-L-aspartate + phosphate + H(+). It functions in the pathway pyrimidine metabolism; UMP biosynthesis via de novo pathway; (S)-dihydroorotate from bicarbonate: step 2/3. In terms of biological role, catalyzes the condensation of carbamoyl phosphate and aspartate to form carbamoyl aspartate and inorganic phosphate, the committed step in the de novo pyrimidine nucleotide biosynthesis pathway. This chain is Aspartate carbamoyltransferase catalytic subunit, found in Xanthomonas axonopodis pv. citri (strain 306).